The primary structure comprises 373 residues: D-amino-acid oxidase 3 (373 aa).

The N-terminal stretch at 1-19 (MVKYDAVILGSGVLGLSIA) is a signal peptide. Ser11, Leu14, Asp35, Ala46, Ser47, Gly51, and Asn53 together coordinate FAD. Phe57 contacts anthranilate. N-linked (GlcNAc...) asparagine glycosylation occurs at Asn180. A disulfide bridge links Cys214 with Cys271. Anthranilate-binding residues include Tyr229, Tyr246, and Arg296. (R)-lactate contacts are provided by Tyr229, Tyr246, and Arg296. FAD contacts are provided by Arg296, Gly342, Gly345, Tyr346, and Gln347. Positions 371-373 (AKL) match the Microbody targeting signal motif.

The protein belongs to the DAMOX/DASOX family. Requires FAD as cofactor.

The protein resides in the peroxisome matrix. The enzyme catalyses a D-alpha-amino acid + O2 + H2O = a 2-oxocarboxylate + H2O2 + NH4(+). Its function is as follows. Catalyzes the oxidative deamination of D-amino acids with broad substrate specificity. Enables the organism to utilize D-amino acids as a source of nutrients. Enables the organism to utilize D-glutamate and D-methionine as a nitrogen source. Protects the organism from the toxicity of D-amino acids, including from D-glutamate. May play a role in its interaction with the host. In Cryptococcus neoformans var. grubii serotype A (strain H99 / ATCC 208821 / CBS 10515 / FGSC 9487) (Filobasidiella neoformans var. grubii), this protein is D-amino-acid oxidase 3.